We begin with the raw amino-acid sequence, 676 residues long: UvrABC system protein B (676 aa).

The Helicase ATP-binding domain occupies 35–192 (QGVADGLMYQ…ARLVAMQYTR (158 aa)). 48 to 55 (GVTGSGKT) provides a ligand contact to ATP. Residues 101-124 (YYDYYQPEAYVPTRDLFIEKDSSV) carry the Beta-hairpin motif. A Helicase C-terminal domain is found at 439–605 (QVDDLLGEIR…GVNKAVRELI (167 aa)). The region spanning 634-669 (AREIKRLEKLMMDHARNLEFEQAAAARDALTALKNR) is the UVR domain.

This sequence belongs to the UvrB family. As to quaternary structure, forms a heterotetramer with UvrA during the search for lesions. Interacts with UvrC in an incision complex.

It localises to the cytoplasm. The UvrABC repair system catalyzes the recognition and processing of DNA lesions. A damage recognition complex composed of 2 UvrA and 2 UvrB subunits scans DNA for abnormalities. Upon binding of the UvrA(2)B(2) complex to a putative damaged site, the DNA wraps around one UvrB monomer. DNA wrap is dependent on ATP binding by UvrB and probably causes local melting of the DNA helix, facilitating insertion of UvrB beta-hairpin between the DNA strands. Then UvrB probes one DNA strand for the presence of a lesion. If a lesion is found the UvrA subunits dissociate and the UvrB-DNA preincision complex is formed. This complex is subsequently bound by UvrC and the second UvrB is released. If no lesion is found, the DNA wraps around the other UvrB subunit that will check the other stand for damage. The protein is UvrABC system protein B of Bordetella avium (strain 197N).